The chain runs to 286 residues: Bifunctional protein FolD (286 aa).

NADP(+)-binding positions include 166 to 168 and Ile232; that span reads GAS.

It belongs to the tetrahydrofolate dehydrogenase/cyclohydrolase family. As to quaternary structure, homodimer.

The enzyme catalyses (6R)-5,10-methylene-5,6,7,8-tetrahydrofolate + NADP(+) = (6R)-5,10-methenyltetrahydrofolate + NADPH. The catalysed reaction is (6R)-5,10-methenyltetrahydrofolate + H2O = (6R)-10-formyltetrahydrofolate + H(+). It participates in one-carbon metabolism; tetrahydrofolate interconversion. Its function is as follows. Catalyzes the oxidation of 5,10-methylenetetrahydrofolate to 5,10-methenyltetrahydrofolate and then the hydrolysis of 5,10-methenyltetrahydrofolate to 10-formyltetrahydrofolate. The chain is Bifunctional protein FolD from Vibrio cholerae serotype O1 (strain ATCC 39541 / Classical Ogawa 395 / O395).